Here is a 79-residue protein sequence, read N- to C-terminus: Aquaporin Z (79 aa).

2 helical membrane-spanning segments follow: residues 4–24 (LFAEFFGTYWLVFGGCGSAVF) and 33–53 (IGFAGVALAFGLTVLTMAYAV). The NPA 1 motif lies at 62-64 (NPA).

This sequence belongs to the MIP/aquaporin (TC 1.A.8) family. Homotetramer.

The protein resides in the cell membrane. It catalyses the reaction H2O(in) = H2O(out). In terms of biological role, channel that permits osmotically driven movement of water in both directions. It is involved in the osmoregulation and in the maintenance of cell turgor during volume expansion in rapidly growing cells. It mediates rapid entry or exit of water in response to abrupt changes in osmolarity. The protein is Aquaporin Z of Flavobacterium johnsoniae (Cytophaga johnsonae).